The following is a 162-amino-acid chain: Succinate dehydrogenase assembly factor 2-A, mitochondrial (162 aa).

It belongs to the SDHAF2 family. In terms of assembly, interacts with the flavoprotein subunit within the SDH catalytic dimer.

The protein localises to the mitochondrion matrix. In terms of biological role, plays an essential role in the assembly of succinate dehydrogenase (SDH), an enzyme complex (also referred to as respiratory complex II) that is a component of both the tricarboxylic acid (TCA) cycle and the mitochondrial electron transport chain, and which couples the oxidation of succinate to fumarate with the reduction of ubiquinone (coenzyme Q) to ubiquinol. Required for flavinylation (covalent attachment of FAD) of the flavoprotein subunit of the SDH catalytic dimer. The chain is Succinate dehydrogenase assembly factor 2-A, mitochondrial from Drosophila yakuba (Fruit fly).